The primary structure comprises 170 residues: Putative pre-16S rRNA nuclease (170 aa).

The disordered stretch occupies residues 1-25 (MVPAQHRPPDRPGDPAHDPGRGRRL). Positions 7 to 21 (RPPDRPGDPAHDPGR) are enriched in basic and acidic residues.

This sequence belongs to the YqgF nuclease family.

It localises to the cytoplasm. Its function is as follows. Could be a nuclease involved in processing of the 5'-end of pre-16S rRNA. The chain is Putative pre-16S rRNA nuclease from Mycobacterium tuberculosis (strain ATCC 25177 / H37Ra).